The sequence spans 226 residues: MTTIKHLAIIMDGNARWADRHNLTKSEGHKAGADKIRELLPEFINLNIPYITLYTFSFENWQRSSSEVDFLIKLLSIYLKNELDSLHENGVKIKVIGRLNLLRSSLQKQINNAIELTKNNNKIKLCIAFSYGSRQEIVDACTKIIAHGKKQVSEYDIQHALYDPEMPDVDLLIRSGGVYRISNFLLWQAAYAELYFSQKYWPDFNKDDIHEAINDYSKRKRTFGKR.

Asp12 is an active-site residue. Asp12 is a Mg(2+) binding site. Substrate contacts are provided by residues 13 to 16 (GNAR), Trp17, Lys25, His29, and 57 to 59 (SFE). Asn60 (proton acceptor) is an active-site residue. Residues Trp61, Arg63, Arg174, and 180–182 (RIS) contribute to the substrate site. Residue Glu193 participates in Mg(2+) binding.

It belongs to the UPP synthase family. Homodimer. Mg(2+) is required as a cofactor.

Functionally, catalyzes the condensation of isopentenyl diphosphate (IPP) with allylic pyrophosphates generating different type of terpenoids. The polypeptide is Isoprenyl transferase (Rickettsia prowazekii (strain Madrid E)).